Reading from the N-terminus, the 159-residue chain is Thymic stromal lymphopoietin (159 aa).

The first 28 residues, 1-28 (MFPFALLYVLSVSFRKIFILQLVGLVLT), serve as a signal peptide directing secretion. Intrachain disulfides connect C34–C110, C69–C75, and C90–C137. N64 is a glycosylation site (N-linked (GlcNAc...) asparagine). N119 carries an N-linked (GlcNAc...) asparagine glycan.

As to quaternary structure, interacts with a receptor composed of CRLF2 and IL7R. Binding of TSLP to CRLF2/TSLPR is a mechanistic prerequisite for recruitment of IL7R to the high-affinity ternary complex. Isoform 1 is expressed in a number of tissues including heart, liver and prostate. Isoform 2 is the predominant form in keratinocytes of oral mucosa, skin and in salivary glands. It is secreted into saliva.

It is found in the secreted. Cytokine that induces the release of T-cell-attracting chemokines from monocytes and, in particular, enhances the maturation of CD11c(+) dendritic cells. Can induce allergic inflammation by directly activating mast cells. In terms of biological role, may act as an antimicrobial peptide in the oral cavity and on the skin. The protein is Thymic stromal lymphopoietin (TSLP) of Homo sapiens (Human).